The primary structure comprises 274 residues: 2,3,4,5-tetrahydropyridine-2,6-dicarboxylate N-succinyltransferase (274 aa).

R106 and D143 together coordinate substrate.

This sequence belongs to the transferase hexapeptide repeat family. As to quaternary structure, homotrimer.

The protein resides in the cytoplasm. It carries out the reaction (S)-2,3,4,5-tetrahydrodipicolinate + succinyl-CoA + H2O = (S)-2-succinylamino-6-oxoheptanedioate + CoA. It participates in amino-acid biosynthesis; L-lysine biosynthesis via DAP pathway; LL-2,6-diaminopimelate from (S)-tetrahydrodipicolinate (succinylase route): step 1/3. The protein is 2,3,4,5-tetrahydropyridine-2,6-dicarboxylate N-succinyltransferase of Rickettsia akari (strain Hartford).